A 146-amino-acid chain; its full sequence is D-aminoacyl-tRNA deacylase (146 aa).

Residues 137–138 carry the Gly-cisPro motif, important for rejection of L-amino acids motif; the sequence is GP.

Belongs to the DTD family. In terms of assembly, homodimer.

It is found in the cytoplasm. The enzyme catalyses glycyl-tRNA(Ala) + H2O = tRNA(Ala) + glycine + H(+). The catalysed reaction is a D-aminoacyl-tRNA + H2O = a tRNA + a D-alpha-amino acid + H(+). In terms of biological role, an aminoacyl-tRNA editing enzyme that deacylates mischarged D-aminoacyl-tRNAs. Also deacylates mischarged glycyl-tRNA(Ala), protecting cells against glycine mischarging by AlaRS. Acts via tRNA-based rather than protein-based catalysis; rejects L-amino acids rather than detecting D-amino acids in the active site. By recycling D-aminoacyl-tRNA to D-amino acids and free tRNA molecules, this enzyme counteracts the toxicity associated with the formation of D-aminoacyl-tRNA entities in vivo and helps enforce protein L-homochirality. In Deinococcus deserti (strain DSM 17065 / CIP 109153 / LMG 22923 / VCD115), this protein is D-aminoacyl-tRNA deacylase.